A 673-amino-acid polypeptide reads, in one-letter code: DNA ligase (673 aa).

Residues 33–37 (DHQYD), 83–84 (SL), and Glu117 contribute to the NAD(+) site. The active-site N6-AMP-lysine intermediate is the Lys119. Residues Arg140, Glu175, Lys282, and Lys306 each contribute to the NAD(+) site. Positions 400, 403, 418, and 424 each coordinate Zn(2+). Positions 592–673 (RGSSAISGKT…WVKMVEDARS (82 aa)) constitute a BRCT domain.

It belongs to the NAD-dependent DNA ligase family. LigA subfamily. It depends on Mg(2+) as a cofactor. Mn(2+) serves as cofactor.

The enzyme catalyses NAD(+) + (deoxyribonucleotide)n-3'-hydroxyl + 5'-phospho-(deoxyribonucleotide)m = (deoxyribonucleotide)n+m + AMP + beta-nicotinamide D-nucleotide.. DNA ligase that catalyzes the formation of phosphodiester linkages between 5'-phosphoryl and 3'-hydroxyl groups in double-stranded DNA using NAD as a coenzyme and as the energy source for the reaction. It is essential for DNA replication and repair of damaged DNA. This is DNA ligase from Anaplasma marginale (strain Florida).